Consider the following 418-residue polypeptide: Voltage-gated ClC-type chloride channel ClcB (418 aa).

Residues 1–4 (MFRR) are Cytoplasmic-facing. The chain crosses the membrane as a helical span at residues 5 to 25 (LLIATVVGILAAFAVAGFRHA). Topologically, residues 26–53 (MLLLEWLFLNNDSGSLVNAATNLSPWRR) are periplasmic. The helical transmembrane segment at 54 to 74 (LLTPALGGLAAGLLLMGWQKF) threads the bilayer. At 75–145 (TQQRPHAPTD…QRFTPRQEWK (71 aa)) the chain is on the cytoplasmic side. The helical transmembrane segment at 146-166 (LWIACGAAAGMAAAYRAPLAG) threads the bilayer. The Periplasmic portion of the chain corresponds to 167 to 177 (SLFIAEVLFGT). The helical transmembrane segment at 178–200 (MMLASLGPVIISAVVALLVSNLI) threads the bilayer. Residues 201 to 221 (NHSDALLYSVQLSVTVQARDY) lie on the Cytoplasmic side of the membrane. The helical transmembrane segment at 222-242 (ALIISTGVLAGLCGPLLLTLM) threads the bilayer. At 243-257 (NACHRGFVSLKLAPP) the chain is on the periplasmic side. A helical transmembrane segment spans residues 258–278 (WQLALGGLIVGLLSLFTPAVW). At 279-290 (GNGYSTVQSFLT) the chain is on the cytoplasmic side. Residues 291 to 311 (APPLLMIIAGIFLCKLCAVLA) form a helical membrane-spanning segment. At 312–315 (SSGS) the chain is on the periplasmic side. The chain crosses the membrane as a helical span at residues 316 to 336 (GAPGGVFTPTLFIGLAIGMLY). The Cytoplasmic segment spans residues 337–351 (GRSLGLWFPDGEEIT). A helical membrane pass occupies residues 352-372 (LLLGLTGMATLLAATTHAPIM). The Periplasmic segment spans residues 373-379 (STLMICE). Residues 380–400 (MTGEYQLLPGLLIACVIASVI) traverse the membrane as a helical segment. The Cytoplasmic portion of the chain corresponds to 401 to 418 (SRTLHRDSIYRQHTAQHS).

It belongs to the chloride channel (TC 2.A.49) family. ClcB subfamily.

The protein localises to the cell inner membrane. Its function is as follows. Probably acts as an electrical shunt for an outwardly-directed proton pump that is linked to amino acid decarboxylation, as part of the extreme acid resistance (XAR) response. The polypeptide is Voltage-gated ClC-type chloride channel ClcB (clcB) (Escherichia coli O157:H7).